The following is a 661-amino-acid chain: CD180 antigen (661 aa).

Positions 1-20 are cleaved as a signal peptide; it reads MAPDISCFFLVALFLASCRA. Topologically, residues 21–626 are extracellular; it reads TTSSDQKCIE…RLSDVTLSCS (606 aa). Residues 33–53 enclose the LRRNT domain; that stretch reads VNKTYNCENLGLNEIPGTLPN. N-linked (GlcNAc...) asparagine glycans are attached at residues Asn-34, Asn-53, Asn-70, and Asn-78. LRR repeat units follow at residues 54 to 75, 78 to 99, 102 to 123, 126 to 147, 150 to 171, 174 to 195, and 201 to 221; these read STECLEFSFNVLPTIQNTTFSR, NLTFLDLTRCQIYWIHEDTFQS, RLDTLVLTANPLIFMAETALSG, ALKHLFFIQTGISSIDFIPLHN, TLESLYLGSNHISSIKLPKGFP, KLKVLDFQNNAIHYLSKEDMSS, and NLSLNLNGNDIAGIELGAFDS. Asn-201, Asn-244, and Asn-288 each carry an N-linked (GlcNAc...) asparagine glycan. LRR repeat units follow at residues 275–296, 299–321, 322–343, 346–366, and 371–391; these read SVESINLQKHYFFNISSNTFHC, GLQELDLTATHLSELPSGLVGLS, TLKKLVLSANKFENLCQISASN, SLTHLSIKGNTKRLELGTGCL, and NLRELDLSHDDIETSDCCNLQ. 2 N-linked (GlcNAc...) asparagine glycosylation sites follow: Asn-394 and Asn-402. LRR repeat units follow at residues 397-418, 421-442, 446-466, 470-493, 497-518, 521-544, and 546-566; these read HLQSLNLSYNEPLSLKTEAFKE, QLELLDLAFTRLKVKDAQSPFQ, LLKVLNLSHSLLDISSEQLFD, ALQHLNLQGNHFPKGNIQKTNSLQ, RLEILVLSFCDLSSIDQHAFTS, MMNHVDLSHNRLTSSSIEALSHLK, and IYLNLASNRISIILPSLLPIL. A glycan (N-linked (GlcNAc...) asparagine) is linked at Asn-451. Positions 577-627 constitute an LRRCT domain; that stretch reads NPLDCTCSNIYFLEWYKENMQKLEDTEDTLCENPPLLRGVRLSDVTLSCSM. The helical transmembrane segment at 627 to 650 threads the bilayer; the sequence is MAAVGIFFLIVFLLVFAILLIFAV. Residues 651-661 lie on the Cytoplasmic side of the membrane; that stretch reads KYFLRWKYQHI.

The protein belongs to the Toll-like receptor family. As to quaternary structure, M-shaped tetramer of two CD180-LY86 heterodimers. As to expression, B-lymphocytes and spleen. Not detected in thymus, kidney, muscle, heart, brain or liver.

The protein resides in the cell membrane. In terms of biological role, may cooperate with MD-1 and TLR4 to mediate the innate immune response to bacterial lipopolysaccharide (LPS) in B-cells. Leads to NF-kappa-B activation. Also involved in the life/death decision of B-cells. The sequence is that of CD180 antigen (Cd180) from Mus musculus (Mouse).